We begin with the raw amino-acid sequence, 149 residues long: Protein DOWN-REGULATED IN DIF1 11 (149 aa).

An N-terminal signal peptide occupies residues 1-22; the sequence is MEKAILITFLIATTSMVYQTIG.

As to expression, mostly expressed in embryo sac cells. Restricted to synergid cells, especially in the filiform apparatus of mature female gametophyte, via MYB98-mediated transcription regulation. Also detected at low levels in egg and central cells.

The sequence is that of Protein DOWN-REGULATED IN DIF1 11 from Arabidopsis thaliana (Mouse-ear cress).